The following is a 478-amino-acid chain: PTS system mannitol-specific EIICB component (478 aa).

Over 1 to 29 (MQQQEQQQGGMKVKVQRFGSYLSGMIMPN) the chain is Cytoplasmic. In terms of domain architecture, PTS EIIC type-2 spans 18–347 (FGSYLSGMIM…VILKSSKASE (330 aa)). The helical transmembrane segment at 30–51 (IGAFIAWGIITALFIPAGWFPN) threads the bilayer. Residues 52–55 (EQLN) lie on the Extracellular side of the membrane. A helical transmembrane segment spans residues 56 to 76 (TLVSPMITYLLPLLIAYTGGK). At 77–139 (MIYDHRGGVV…QGFEMLINNF (63 aa)) the chain is on the cytoplasmic side. Residues 140–161 (TAGIVGAALTILAFYAIGPVVL) traverse the membrane as a helical segment. The Extracellular portion of the chain corresponds to 162–170 (TLNKLLAAG). A helical transmembrane segment spans residues 171-191 (VEVIVHANLLPVASVFVEPAK). The Cytoplasmic segment spans residues 192–278 (VLFLNNAINH…ILMKPALILA (87 aa)). Residues 279–298 (AIAGGASGLLTFTIFNAGLV) form a helical membrane-spanning segment. The Extracellular segment spans residues 299 to 318 (AAASPGSIIALMAMTPRGGY). A helical transmembrane segment spans residues 319–340 (FGVLAGVLVAAAVSFIVSAVIL). At 341-478 (KSSKASEEDL…YDELIEKLKK (138 aa)) the chain is on the cytoplasmic side. Positions 390–478 (NKIIFACDAG…YDELIEKLKK (89 aa)) constitute a PTS EIIB type-2 domain. The active-site Phosphocysteine intermediate; for EIIB activity is C396. The residue at position 396 (C396) is a Phosphocysteine; by EIIA.

Homodimer.

It localises to the cell membrane. It catalyses the reaction D-mannitol(out) + N(pros)-phospho-L-histidyl-[protein] = D-mannitol 1-phosphate(in) + L-histidyl-[protein]. In terms of biological role, the phosphoenolpyruvate-dependent sugar phosphotransferase system (sugar PTS), a major carbohydrate active transport system, catalyzes the phosphorylation of incoming sugar substrates concomitantly with their translocation across the cell membrane. The enzyme II CmtAB PTS system is involved in D-mannitol transport. In Bacillus subtilis (strain 168), this protein is PTS system mannitol-specific EIICB component.